We begin with the raw amino-acid sequence, 577 residues long: Isocitrate dehydrogenase kinase/phosphatase (577 aa).

ATP-binding positions include 318–324 and Lys339; that span reads APGVRGM. Asp374 is an active-site residue.

Belongs to the AceK family.

The protein localises to the cytoplasm. The enzyme catalyses L-seryl-[isocitrate dehydrogenase] + ATP = O-phospho-L-seryl-[isocitrate dehydrogenase] + ADP + H(+). Bifunctional enzyme which can phosphorylate or dephosphorylate isocitrate dehydrogenase (IDH) on a specific serine residue. This is a regulatory mechanism which enables bacteria to bypass the Krebs cycle via the glyoxylate shunt in response to the source of carbon. When bacteria are grown on glucose, IDH is fully active and unphosphorylated, but when grown on acetate or ethanol, the activity of IDH declines drastically concomitant with its phosphorylation. The protein is Isocitrate dehydrogenase kinase/phosphatase of Pseudomonas aeruginosa (strain ATCC 15692 / DSM 22644 / CIP 104116 / JCM 14847 / LMG 12228 / 1C / PRS 101 / PAO1).